A 134-amino-acid chain; its full sequence is Probable RNA-binding protein MJ0652 (134 aa).

Residues 11–108 (RKLTGKMKRM…REGWKKYLAK (98 aa)) form the CRM domain.

In Methanocaldococcus jannaschii (strain ATCC 43067 / DSM 2661 / JAL-1 / JCM 10045 / NBRC 100440) (Methanococcus jannaschii), this protein is Probable RNA-binding protein MJ0652.